The primary structure comprises 373 residues: P2Y purinoceptor 1 (373 aa).

Topologically, residues 1-51 are extracellular; the sequence is MTEVPWSVVPNGTDAAFLAGLGSLWGNSTVASTAAVSSSFQCALTKTGFQF. N-linked (GlcNAc...) asparagine glycans are attached at residues Asn-11 and Asn-27. Cystine bridges form between Cys-42/Cys-296 and Cys-124/Cys-202. Lys-46 contributes to the ADP binding site. The chain crosses the membrane as a helical span at residues 52–74; it reads YYLPAVYILVFIIGFLGNSVAIW. At 75–87 the chain is on the cytoplasmic side; sequence MFVFHMKPWSGIS. Residues 88-109 traverse the membrane as a helical segment; sequence VYMFNLALADFLYVLTLPALIF. The Extracellular segment spans residues 110-125; the sequence is YYFNKTDWIFGDAMCK. Asn-113 carries N-linked (GlcNAc...) asparagine glycosylation. Residues 126–147 traverse the membrane as a helical segment; it reads LQRFIFHVNLYGSILFLTCISA. At 148 to 166 the chain is on the cytoplasmic side; that stretch reads HRYSGVVYPLKSLGRLKKK. A helical transmembrane segment spans residues 167-188; sequence NAIYVSVLVWLIVVVAISPILF. Residues 189-214 are Extracellular-facing; it reads YSGTGTRKNKTVTCYDTTSNDYLRSY. Asn-197 is a glycosylation site (N-linked (GlcNAc...) asparagine). Position 203 to 205 (203 to 205) interacts with ADP; the sequence is YDT. Residues 215 to 237 form a helical membrane-spanning segment; the sequence is FIYSMCTTVAMFCIPLVLILGCY. Residues 238–260 lie on the Cytoplasmic side of the membrane; sequence GLIVKALIYNDLDNSPLRRKSIY. A helical membrane pass occupies residues 261–284; the sequence is LVIIVLTVFAVSYIPFHVMKTMNL. ADP-binding positions include 283–287, 303–306, and Arg-310; these read NLRAR and YATY. Topologically, residues 285–303 are extracellular; that stretch reads RARLDFQTPEMCDFNDRVY. Residues 304–325 traverse the membrane as a helical segment; that stretch reads ATYQVTRGLASLNSCVDPILYF. Residues 326–373 are Cytoplasmic-facing; that stretch reads LAGDTFRRRLSRATRKASRRSEANLQSKSEEMTLNILSEFKQNGDTSL.

The protein belongs to the G-protein coupled receptor 1 family.

It is found in the cell membrane. Functionally, receptor for extracellular adenine nucleotides such as ADP. In platelets, binding to ADP leads to mobilization of intracellular calcium ions via activation of phospholipase C, a change in platelet shape, and ultimately platelet aggregation. This chain is P2Y purinoceptor 1 (P2ry1), found in Mus musculus (Mouse).